We begin with the raw amino-acid sequence, 513 residues long: Prostaglandin E2 receptor EP4 subtype (513 aa).

The Extracellular segment spans residues 1–44 (MAEVGGTIPRSNRELQRCVLLTTTIMSIPGVNASFSSTPERLNS). Asparagine 32 carries an N-linked (GlcNAc...) asparagine glycan. Residues 45-68 (PVTIPAVMFIFGVVGNLVAIVVLC) traverse the membrane as a helical segment. The Cytoplasmic segment spans residues 69–80 (KSRKEQKETTFY). The chain crosses the membrane as a helical span at residues 81 to 104 (TLVCGLAVTDLLGTLLVSPVTIAT). The Extracellular segment spans residues 105 to 121 (YMKGQWPGDQALCDYST). A disulfide bridge links cysteine 117 with cysteine 195. A helical transmembrane segment spans residues 122–140 (FILLFFGLSGLSIICAMSI). Over 141 to 160 (ERYLAINHAYFYSHYVDKRL) the chain is Cytoplasmic. Residues 161 to 185 (AGLTLFAIYASNVLFCALPNMGLGR) form a helical membrane-spanning segment. Residues 186–209 (SERQYPGTWCFIDWTTNVTAYAAF) lie on the Extracellular side of the membrane. Residues 210–236 (SYMYAGFSSFLILATVLCNVLVCGALL) traverse the membrane as a helical segment. Over 237-295 (RMHRQFMRRTSLGTEQHHAAAAAAVASVACRGHAGASPALQRLSDFRRRRSFRRIAGAE) the chain is Cytoplasmic. The chain crosses the membrane as a helical span at residues 296-323 (IQMVILLIATSLVVLICSIPLVVRVFIN). The Extracellular portion of the chain corresponds to 324 to 340 (QLYQPNVVKDISRNPDL). Residues 341-360 (QAIRIASVNPILDPWIYILL) traverse the membrane as a helical segment. Residues 361 to 513 (RKTVLSKAIE…ETLKLSEKCI (153 aa)) are Cytoplasmic-facing. Residues 383–403 (GRDSSAQHCSESRRTSSAMSG) are disordered. Polar residues predominate over residues 384–403 (RDSSAQHCSESRRTSSAMSG). Phosphoserine is present on residues serine 402, serine 405, and serine 407.

This sequence belongs to the G-protein coupled receptor 1 family. As to quaternary structure, interacts with FEM1A. Post-translationally, phosphorylation mediates agonist-mediated desensitization by promoting cytoplasmic retention. As to expression, abundant expression in ileum, thymus and mastocytoma P-815 cells. Also observed in lung, spleen, heart and uterus.

It localises to the cell membrane. Receptor for prostaglandin E2 (PGE2). The activity of this receptor is mediated by G(s) proteins that stimulate adenylate cyclase. Has a relaxing effect on smooth muscle. May play an important role in regulating renal hemodynamics, intestinal epithelial transport, adrenal aldosterone secretion, and uterine function. The polypeptide is Prostaglandin E2 receptor EP4 subtype (Ptger4) (Mus musculus (Mouse)).